The primary structure comprises 569 residues: Urease subunit alpha (569 aa).

The Urease domain maps to 132–569; the sequence is GGVDTHIHFI…VPLGQRYFLF (438 aa). Residues His137, His139, and Lys220 each contribute to the Ni(2+) site. Residue Lys220 is modified to N6-carboxylysine. Residue His222 participates in substrate binding. Ni(2+) is bound by residues His249 and His275. Residue His323 is the Proton donor of the active site. Asp363 contacts Ni(2+).

This sequence belongs to the metallo-dependent hydrolases superfamily. Urease alpha subunit family. As to quaternary structure, heterotrimer of UreA (gamma), UreB (beta) and UreC (alpha) subunits. Three heterotrimers associate to form the active enzyme. The cofactor is Ni cation. Post-translationally, carboxylation allows a single lysine to coordinate two nickel ions.

Its subcellular location is the cytoplasm. The catalysed reaction is urea + 2 H2O + H(+) = hydrogencarbonate + 2 NH4(+). The protein operates within nitrogen metabolism; urea degradation; CO(2) and NH(3) from urea (urease route): step 1/1. This chain is Urease subunit alpha, found in Bacillus subtilis (strain 168).